A 353-amino-acid polypeptide reads, in one-letter code: Quinolinate synthase (353 aa).

Iminosuccinate is bound by residues His-47 and Ser-68. Cys-113 contacts [4Fe-4S] cluster. Iminosuccinate-binding positions include Tyr-139–Asn-141 and Ser-156. Cys-200 contributes to the [4Fe-4S] cluster binding site. Iminosuccinate is bound by residues His-226 to Glu-228 and Thr-243. A [4Fe-4S] cluster-binding site is contributed by Cys-297.

The protein belongs to the quinolinate synthase family. Type 1 subfamily. It depends on [4Fe-4S] cluster as a cofactor.

It localises to the cytoplasm. It carries out the reaction iminosuccinate + dihydroxyacetone phosphate = quinolinate + phosphate + 2 H2O + H(+). It functions in the pathway cofactor biosynthesis; NAD(+) biosynthesis; quinolinate from iminoaspartate: step 1/1. Catalyzes the condensation of iminoaspartate with dihydroxyacetone phosphate to form quinolinate. The sequence is that of Quinolinate synthase from Yersinia pestis bv. Antiqua (strain Nepal516).